Reading from the N-terminus, the 494-residue chain is Membrane-bound lytic murein transglycosylase F 1 (494 aa).

Residues 1-24 form the signal peptide; sequence MRIMAVRLVAGAITLALMAYAWLA. A non-LT domain region spans residues 25–270; it reads WERARDPEPI…TLLEEHFGHL (246 aa). An LT domain region spans residues 271-494; it reads GRFDYVGFRA…APLPADPPAD (224 aa). The active site involves E317. The segment at 464 to 494 is disordered; that stretch reads QVPAGEALGEPPLPTPPAPPGAPLPADPPAD. Pro residues predominate over residues 474–494; that stretch reads PPLPTPPAPPGAPLPADPPAD.

This sequence in the N-terminal section; belongs to the bacterial solute-binding protein 3 family. It in the C-terminal section; belongs to the transglycosylase Slt family.

It localises to the cell outer membrane. The catalysed reaction is Exolytic cleavage of the (1-&gt;4)-beta-glycosidic linkage between N-acetylmuramic acid (MurNAc) and N-acetylglucosamine (GlcNAc) residues in peptidoglycan, from either the reducing or the non-reducing ends of the peptidoglycan chains, with concomitant formation of a 1,6-anhydrobond in the MurNAc residue.. Functionally, murein-degrading enzyme that degrades murein glycan strands and insoluble, high-molecular weight murein sacculi, with the concomitant formation of a 1,6-anhydromuramoyl product. Lytic transglycosylases (LTs) play an integral role in the metabolism of the peptidoglycan (PG) sacculus. Their lytic action creates space within the PG sacculus to allow for its expansion as well as for the insertion of various structures such as secretion systems and flagella. The sequence is that of Membrane-bound lytic murein transglycosylase F 1 from Alkalilimnicola ehrlichii (strain ATCC BAA-1101 / DSM 17681 / MLHE-1).